The following is a 1556-amino-acid chain: Bromodomain adjacent to zinc finger domain protein 1A (1556 aa).

The segment at 1 to 128 (MPLLHRKPFV…EETVEVIRNN (128 aa)) is required for interaction with the CHRAC1-POLE3 heterodimer. Required for interaction with the CHRAC1-POLE3 heterodimer. The tract at residues 1–133 (MPLLHRKPFV…VIRNNGARLQ (133 aa)) is required for interaction with NCOR1. The 107-residue stretch at 22–128 (EEVFYCKVTN…EETVEVIRNN (107 aa)) folds into the WAC domain. A Phosphoserine modification is found at Ser270. A coiled-coil region spans residues 306–397 (KERDKLLKQE…YVEYLKQWSK (92 aa)). Residues 422–487 (PEIFGDALMV…LTAIFQAIAE (66 aa)) form the DDT domain. Residues 634–709 (IEDYVDILRQ…DISIGEEERE (76 aa)) adopt a coiled-coil conformation. The span at 662–695 (EAAARIRKRKEEKLKEQEQKMKEKQEKLKEDEQR) shows a compositional bias: basic and acidic residues. Disordered stretches follow at residues 662–754 (EAAA…NGFK), 841–877 (PSSF…GPRD), and 941–966 (FHFS…AYDP). Residues 667–933 (IRKRKEEKLK…QEKSRICAQL (267 aa)) form a required for interaction with SMARCA5 and formation of the CHRAC ISWI chromatin remodeling complex region. At Ser702 the chain carries Phosphoserine. The segment covering 703 to 713 (IGEEEREDFDT) has biased composition (acidic residues). Basic and acidic residues predominate over residues 715–726 (IESKDTEQKELD). Residues 727-736 (QDMVTEDEDD) show a composition bias toward acidic residues. Thr731 bears the Phosphothreonine mark. Composition is skewed to polar residues over residues 842 to 872 (SSFQ…SNID) and 951 to 965 (SKPT…NAYD). Lys952 participates in a covalent cross-link: Glycyl lysine isopeptide (Lys-Gly) (interchain with G-Cter in SUMO2). Phosphoserine is present on residues Ser960 and Ser961. A PHD-type zinc finger spans residues 1148–1198 (NARCKICRKKGDAENMVLCDGCDRGHHTYCVRPKLKTVPEGDWFCPECRPK). 2 disordered regions span residues 1202 to 1376 (RRLS…NFPN) and 1399 to 1431 (LQES…RQGG). The segment covering 1213-1258 (ESDEDVEDSMGGEDDEVDGDEEEGQSEEEEYEVEQDEDDSQEEEEV) has biased composition (acidic residues). Over residues 1262 to 1276 (KRGRPQVRLPVKTRG) the composition is skewed to basic residues. The segment covering 1277-1312 (KLSSSFSSRGQQQEPGRYPSRSQQSTPKTTVSSKTG) has biased composition (polar residues). Phosphoserine is present on residues Ser1281, Ser1320, Ser1339, Ser1353, Ser1363, Ser1371, Ser1402, Ser1413, and Ser1417. The segment covering 1363–1374 (SANNTPENSPNF) has biased composition (polar residues). One can recognise a Bromo domain in the interval 1430 to 1533 (GGVHELSAFE…AFFHIQAQKL (104 aa)). At Thr1547 the chain carries Phosphothreonine.

It belongs to the WAL family. Component of the ACF-1 ISWI chromatin remodeling complex at least composed of SMARCA1 and BAZ1A, which regulates the spacing of histone octamers on the DNA template to facilitate access to DNA. Within the ACF-1 ISWI chromatin remodeling complex interacts with SMARCA1; the interaction is direct. Component of the ACF-5 ISWI chromatin remodeling complex (also called the ACF complex) at least composed of BAZ1A and SMARCA5/SNF2H, which regulates the spacing of histone octamers on the DNA template to facilitate access to DNA. Within the ACF-5 ISWI chromatin remodeling complex interacts with SMARCA5/SNF2H; the interaction is direct. Component of the CHRAC ISWI chromatin remodeling complex at least composed of SMARCA5/SNF2H, BAZ1A/ACF1, CHRAC1 and POLE3; the complex preferentially binds DNA through the CHRAC1-POLE3 heterodimer and possesses ATP-dependent nucleosome-remodeling activity. Within the complex interacts (via N-terminus) with POLE3-CHRAC1 heterodimer; the interaction is direct and is required for the complex to preferentially bind to DNA. Within the complex interacts with SMARCA5/SNF2H; the interaction is direct and promotes the interaction with the POLE3-CHRAC1 heterodimer. Interacts with NCOR1 (via its RD1 domain); the interaction corepresses a number of NCOR1-regulated genes. In terms of tissue distribution, highly expressed in testis and at low or undetectable levels in other tissues analyzed.

It localises to the nucleus. Its function is as follows. Regulatory subunit of the ATP-dependent ACF-1 and ACF-5 ISWI chromatin remodeling complexes, which form ordered nucleosome arrays on chromatin and slide edge- and center-positioned histone octamers away from their original location on the DNA template to facilitate access to DNA during DNA-templated processes such as DNA replication, transcription, and repair. Both complexes regulate the spacing of nucleosomes along the chromatin and have the ability to slide mononucleosomes to the center of a DNA template in an ATP-dependent manner. The ACF-1 ISWI chromatin remodeling complex has a lower ATP hydrolysis rate than the ACF-5 ISWI chromatin remodeling complex. Has a role in sensing the length of DNA which flank nucleosomes, which modulates the nucleosome spacing activity of the ACF-5 ISWI chromatin remodeling complex. Involved in DNA replication and together with SMARCA5/SNF2H is required for replication of pericentric heterochromatin in S-phase. May have a role in nuclear receptor-mediated transcription repression. This is Bromodomain adjacent to zinc finger domain protein 1A (BAZ1A) from Homo sapiens (Human).